The following is a 501-amino-acid chain: MSSSGTSDLPVLPTDLKIQYTKIFINNEWHDSVSGKKFPVFNPATEEELCQVEEGDKADVDKAVKAARQAFQIGSPWRTMDASERGRLLYKLADLIERDRLLLATMESMNGGKLYSNAYLNDLAGCIKTLRYCAGWADKIQGRTIPIDGNFFTYTRHEPIGVCGQIIPWNFPLVMLIWKIGPALSCGNTVVVKPAEQTPLTALHVASLIKEAGFPPGVVNIVPGYGPTAGAAISSHMDIDKVAFTGSTEVGKLIKEAAGKSNLKRVTLELGGKSPCIVLADADLDNAVEFAHHGVFYHQGQCCIAASRIFVEESIYDEFVRRSVERAKKYILGNPLTPGATQGPQIDKEQYDKILDLIESGKKEGAKLECGGGPWGNKGYFVQPTVFSNVTDEMRIAKEEIFGPVQQIMKFKSLDDVIKRANNTFYGLSAGVFTNDIDKAVTISSALQAGTVWVNCYGVVTAQCPFGGFKMSGNGRELGEYGFHEYTEVKTVTVKISQKNS.

Ser2 is subject to N-acetylserine. 2 positions are modified to N6-acetyllysine: Lys91 and Lys128. NAD(+)-binding positions include 167–170 (IPWN), 193–196 (KPAE), 226–227 (GP), and 246–247 (GS). N6-acetyllysine is present on Lys252. Glu269 (proton acceptor) is an active-site residue. Residue 269 to 271 (ELG) participates in NAD(+) binding. The active-site Nucleophile is the Cys303. A mediates interaction with PRMT3 region spans residues 336–501 (LTPGATQGPQ…VTVKISQKNS (166 aa)). Residue Thr337 is modified to Phosphothreonine. 349-353 (EQYDK) provides a ligand contact to NAD(+). 2 positions are modified to N6-acetyllysine: Lys353 and Lys367. An NAD(+)-binding site is contributed by 400–402 (EIF). Lys410 is subject to N6-acetyllysine. Ser413 is modified (phosphoserine). N6-acetyllysine occurs at positions 419 and 495.

This sequence belongs to the aldehyde dehydrogenase family. In terms of assembly, homotetramer. Interacts with PRMT3; the interaction is direct, inhibits ALDH1A1 aldehyde dehydrogenase activity and is independent of the methyltransferase activity of PRMT3. Post-translationally, the N-terminus is blocked most probably by acetylation.

It localises to the cytoplasm. Its subcellular location is the cytosol. The protein resides in the cell projection. It is found in the axon. It catalyses the reaction an aldehyde + NAD(+) + H2O = a carboxylate + NADH + 2 H(+). The enzyme catalyses all-trans-retinal + NAD(+) + H2O = all-trans-retinoate + NADH + 2 H(+). It carries out the reaction 9-cis-retinal + NAD(+) + H2O = 9-cis-retinoate + NADH + 2 H(+). The catalysed reaction is 11-cis-retinal + NAD(+) + H2O = 11-cis-retinoate + NADH + 2 H(+). It catalyses the reaction 13-cis-retinal + NAD(+) + H2O = 13-cis-retinoate + NADH + 2 H(+). The enzyme catalyses 3-deoxyglucosone + NAD(+) + H2O = 2-dehydro-3-deoxy-D-gluconate + NADH + 2 H(+). It carries out the reaction (E)-4-hydroxynon-2-enal + NAD(+) + H2O = (E)-4-hydroxynon-2-enoate + NADH + 2 H(+). The catalysed reaction is malonaldehyde + NAD(+) + H2O = 3-oxopropanoate + NADH + 2 H(+). It catalyses the reaction hexanal + NAD(+) + H2O = hexanoate + NADH + 2 H(+). The enzyme catalyses propanal + NAD(+) + H2O = propanoate + NADH + 2 H(+). It carries out the reaction acetaldehyde + NAD(+) + H2O = acetate + NADH + 2 H(+). The catalysed reaction is benzaldehyde + NAD(+) + H2O = benzoate + NADH + 2 H(+). It catalyses the reaction 4-aminobutanal + NAD(+) + H2O = 4-aminobutanoate + NADH + 2 H(+). The protein operates within cofactor metabolism; retinol metabolism. Cytosolic dehydrogenase that catalyzes the irreversible oxidation of a wide range of aldehydes to their corresponding carboxylic acid. Functions downstream of retinol dehydrogenases and catalyzes the oxidation of retinaldehyde into retinoic acid, the second step in the oxidation of retinol/vitamin A into retinoic acid. This pathway is crucial to control the levels of retinol and retinoic acid, two important molecules which excess can be teratogenic and cytotoxic. Also oxidizes aldehydes resulting from lipid peroxidation like (E)-4-hydroxynon-2-enal/HNE, malonaldehyde and hexanal that form protein adducts and are highly cytotoxic. By participating for instance to the clearance of (E)-4-hydroxynon-2-enal/HNE in the lens epithelium prevents the formation of HNE-protein adducts and lens opacification. Also functions downstream of fructosamine-3-kinase in the fructosamine degradation pathway by catalyzing the oxidation of 3-deoxyglucosone, the carbohydrate product of fructosamine 3-phosphate decomposition, which is itself a potent glycating agent that may react with lysine and arginine side-chains of proteins. Also has an aminobutyraldehyde dehydrogenase activity and is probably part of an alternative pathway for the biosynthesis of GABA/4-aminobutanoate in midbrain, thereby playing a role in GABAergic synaptic transmission. This is Aldehyde dehydrogenase 1A1 from Macaca fascicularis (Crab-eating macaque).